The chain runs to 133 residues: Type VI secretion amidase effector 2 protein (133 aa).

Active-site residues include Cys-23 and His-73.

The protein belongs to the cell wall amidase Dae2/Tae2-like family.

It is found in the host periplasm. Its subcellular location is the secreted. It participates in cell wall degradation; peptidoglycan degradation. In terms of biological role, toxic component of a contact-dependent interbacterial competition system (also called effector-immunity systems). Secreted by the SPI-6 type VI secretion system, probably into the periplasm of bacterial target cells. A cell wall amidase with specificity toward the D-meso-DAP-D-alanine bond (D-meso-diaminopimelic-D-alanine) found in peptidoglycan of Gram-negative bacteria. Toxicity is counteracted by a cognate immunity protein Tai2 (t2585), but not immunity proteins associated with a similar endopeptidase in other bacteria. In vitro degrades peptidoglycans from Gram-negative but not Gram-positive bacteria. This chain is Type VI secretion amidase effector 2 protein, found in Salmonella typhi.